We begin with the raw amino-acid sequence, 525 residues long: Neuropilin and tolloid-like protein 2 (525 aa).

A signal peptide spans 1–22 (MALERLCSVLKVLLITVLVVEG). Residues 23 to 347 (IAVAQKTQDG…GVFEQITKTH (325 aa)) are Extracellular-facing. Intrachain disulfides connect cysteine 45–cysteine 72, cysteine 100–cysteine 122, cysteine 177–cysteine 207, cysteine 234–cysteine 256, cysteine 297–cysteine 309, cysteine 304–cysteine 322, and cysteine 316–cysteine 331. CUB domains follow at residues 45 to 159 (CGIW…YSFI) and 177 to 292 (CQFE…FTSF). The LDL-receptor class A domain maps to 296 to 332 (PCTSSTFFCHSNMCINNSLVCNGVQNCAYPWDENHCK). Asparagine 311 carries N-linked (GlcNAc...) asparagine glycosylation. A helical transmembrane segment spans residues 348–368 (GTIIGITSGIVLVLLIISILV). The Cytoplasmic portion of the chain corresponds to 369-525 (QVKQPRKKVM…SAQASISIDF (157 aa)). A Phosphoserine modification is found at serine 409.

As to quaternary structure, interacts with GRIK2 and GRIK3, but neither with AMPA-nor with NMDA-sensitive glutamate receptors. In terms of processing, N-glycosylated.

Its subcellular location is the membrane. Functionally, accessory subunit of neuronal kainate-sensitive glutamate receptors, GRIK2 and GRIK3. Increases kainate-receptor channel activity, slowing the decay kinetics of the receptors, without affecting their expression at the cell surface, and increasing the open probability of the receptor channels. Modulates the agonist sensitivity of kainate receptors. Slows the decay of kainate receptor-mediated excitatory postsynaptic currents (EPSCs), thus directly influencing synaptic transmission. This chain is Neuropilin and tolloid-like protein 2 (NETO2), found in Homo sapiens (Human).